Here is a 115-residue protein sequence, read N- to C-terminus: Large ribosomal subunit protein bL19 (115 aa).

It belongs to the bacterial ribosomal protein bL19 family.

In terms of biological role, this protein is located at the 30S-50S ribosomal subunit interface and may play a role in the structure and function of the aminoacyl-tRNA binding site. This Streptococcus pneumoniae (strain JJA) protein is Large ribosomal subunit protein bL19.